The following is a 433-amino-acid chain: METGGGGDGTGDICCLSYNQDCTSVAIGMRSGYKLYSLSNVERLDLVHESCEAKDVYIVERLFSSSLVVVVSHAKPRQMNVLHFKKGTEICNYNYSDNILSIRLNRQRLIVCLEESIYIHNIKDMKLLKTLLDTPRNPHGLCTLSINHSNSYLAYPGSSSTGEVSLYDANCLKCECTIPAHDSPLAAIAFNSTGTKLASASEKGTVIRVFSIPDGQKLYEFRRGMKRYVNISSLVFSMDSQFLCASSNTETVHVFKLEQLPERSEENASWTGYMGKMFMAASNYLPTQVSDMMNQDRAFATVRLNFSGQKNACTLVTIQKLPRLLVTSSSGHLYVYNLDPQDGGECVLIKKHSLLGSAKSETDGDSDAESPVPVSYAATVARPSSAPALSTITGYSEDGGTLRGEVIPEHELAVGPVCLDDEKEFPPVSIKNP.

The short motif at 127–132 (LLKTLL) is the Nuclear receptor interaction element. 2 WD repeats span residues 136 to 177 (RNPH…CECT) and 180 to 220 (AHDS…KLYE). Positions 221-224 (FRRG) match the L/FRRG motif motif. 2 WD repeats span residues 226–265 (KRYV…ERSE) and 296–346 (DRAF…GGEC).

Belongs to the WD repeat PROPPIN family.

The protein resides in the golgi apparatus. Its subcellular location is the trans-Golgi network. It is found in the endosome. The protein localises to the cytoplasmic vesicle. It localises to the clathrin-coated vesicle. The protein resides in the preautophagosomal structure membrane. Its subcellular location is the cytoplasm. It is found in the cytoskeleton. Component of the autophagy machinery that controls the major intracellular degradation process by which cytoplasmic materials are packaged into autophagosomes and delivered to lysosomes for degradation. Plays an important role in starvation- and calcium-mediated autophagy, as well as in mitophagy. Functions downstream of the ulk1 and PI3-kinases that produce phosphatidylinositol 3-phosphate (PtdIns3P) on membranes of the endoplasmic reticulum once activated. Binds phosphatidylinositol 3-phosphate (PtdIns3P), and maybe other phosphoinositides including PtdIns3,5P2 and PtdIns5P, and is recruited to phagophore assembly sites at the endoplasmic reticulum membranes. There, it assists wipi2 in the recruitment of atg12-atg5-atg16l1, a complex that directly controls the elongation of the nascent autophagosomal membrane. Together with wdr45/wipi4, promotes atg2 (atg2a or atg2b)-mediated lipid transfer by enhancing atg2-association with phosphatidylinositol 3-monophosphate (PI3P)-containing membranes. The chain is WD repeat domain phosphoinositide-interacting protein 1 (wipi1) from Xenopus laevis (African clawed frog).